Reading from the N-terminus, the 198-residue chain is FMN-dependent NADH:quinone oxidoreductase (198 aa).

Residues S10, 16–18 (SQS), 94–97 (MYNF), and 138–141 (TRGG) contribute to the FMN site.

It belongs to the azoreductase type 1 family. In terms of assembly, homodimer. It depends on FMN as a cofactor.

It carries out the reaction 2 a quinone + NADH + H(+) = 2 a 1,4-benzosemiquinone + NAD(+). It catalyses the reaction N,N-dimethyl-1,4-phenylenediamine + anthranilate + 2 NAD(+) = 2-(4-dimethylaminophenyl)diazenylbenzoate + 2 NADH + 2 H(+). Its function is as follows. Quinone reductase that provides resistance to thiol-specific stress caused by electrophilic quinones. Also exhibits azoreductase activity. Catalyzes the reductive cleavage of the azo bond in aromatic azo compounds to the corresponding amines. The polypeptide is FMN-dependent NADH:quinone oxidoreductase (Shewanella baltica (strain OS185)).